Consider the following 158-residue polypeptide: NAD(P)H-quinone oxidoreductase subunit J, chloroplastic (158 aa).

Belongs to the complex I 30 kDa subunit family. As to quaternary structure, NDH is composed of at least 16 different subunits, 5 of which are encoded in the nucleus.

The protein resides in the plastid. The protein localises to the chloroplast thylakoid membrane. The catalysed reaction is a plastoquinone + NADH + (n+1) H(+)(in) = a plastoquinol + NAD(+) + n H(+)(out). It carries out the reaction a plastoquinone + NADPH + (n+1) H(+)(in) = a plastoquinol + NADP(+) + n H(+)(out). In terms of biological role, NDH shuttles electrons from NAD(P)H:plastoquinone, via FMN and iron-sulfur (Fe-S) centers, to quinones in the photosynthetic chain and possibly in a chloroplast respiratory chain. The immediate electron acceptor for the enzyme in this species is believed to be plastoquinone. Couples the redox reaction to proton translocation, and thus conserves the redox energy in a proton gradient. The protein is NAD(P)H-quinone oxidoreductase subunit J, chloroplastic of Pelargonium hortorum (Common geranium).